The chain runs to 213 residues: Endoplasmic reticulum vesicle protein 25 (213 aa).

An N-terminal signal peptide occupies residues M1 to A20. The Lumenal portion of the chain corresponds to V21–K181. The region spanning P33–I122 is the GOLD domain. Residues V182 to L202 traverse the membrane as a helical segment. Topologically, residues R203–D213 are cytoplasmic.

The protein belongs to the EMP24/GP25L family.

Its subcellular location is the endoplasmic reticulum membrane. The protein resides in the golgi apparatus membrane. In terms of biological role, constituent of COPII-coated endoplasmic reticulum-derived transport vesicles. Required for efficient transport of a subset of secretory proteins to the Golgi. Facilitates retrograde transport from the Golgi to the endoplasmic reticulum. The chain is Endoplasmic reticulum vesicle protein 25 (ERV25) from Cryptococcus neoformans var. neoformans serotype D (strain JEC21 / ATCC MYA-565) (Filobasidiella neoformans).